The following is a 355-amino-acid chain: Probable protein phosphatase 2C 21 (355 aa).

The PPM-type phosphatase domain maps to Arg23–Phe329. Mn(2+) contacts are provided by Asp57, Gly58, Asp272, and Asp320. A disordered region spans residues Phe329–Ser355.

Belongs to the PP2C family. Mg(2+) serves as cofactor. Mn(2+) is required as a cofactor.

The enzyme catalyses O-phospho-L-seryl-[protein] + H2O = L-seryl-[protein] + phosphate. It carries out the reaction O-phospho-L-threonyl-[protein] + H2O = L-threonyl-[protein] + phosphate. This is Probable protein phosphatase 2C 21 (PPC4-2) from Arabidopsis thaliana (Mouse-ear cress).